Reading from the N-terminus, the 453-residue chain is UDP-N-acetylmuramoylalanine--D-glutamate ligase (453 aa).

115–121 (GTNGKTT) is a binding site for ATP.

This sequence belongs to the MurCDEF family.

Its subcellular location is the cytoplasm. It carries out the reaction UDP-N-acetyl-alpha-D-muramoyl-L-alanine + D-glutamate + ATP = UDP-N-acetyl-alpha-D-muramoyl-L-alanyl-D-glutamate + ADP + phosphate + H(+). Its pathway is cell wall biogenesis; peptidoglycan biosynthesis. Cell wall formation. Catalyzes the addition of glutamate to the nucleotide precursor UDP-N-acetylmuramoyl-L-alanine (UMA). The sequence is that of UDP-N-acetylmuramoylalanine--D-glutamate ligase from Geotalea daltonii (strain DSM 22248 / JCM 15807 / FRC-32) (Geobacter daltonii).